We begin with the raw amino-acid sequence, 284 residues long: Insulin-like growth factor-binding protein 2 (284 aa).

The N-terminal stretch at 1 to 21 (MGLSRYLLGLLLGVLCTPAPA) is a signal peptide. The IGFBP N-terminal domain maps to 23–106 (VLFRCPPCSP…VLGLGTCGKR (84 aa)). 6 disulfide bridges follow: C27–C56, C30–C58, C38–C59, C47–C62, C70–C83, and C77–C103. Residues 108–184 (DTEYGSSQER…KSEDKKRPAR (77 aa)) form a disordered region. Residues 117-127 (RGTELPEERSD) show a composition bias toward basic and acidic residues. Low complexity predominate over residues 136–145 (EAGPAVAGEA). Basic and acidic residues predominate over residues 152-180 (KKEMKEIAVTRERANEQQRSKSNKSEDKK). The region spanning 184–266 (RSLCQLQLDQ…SPTIRGDPEC (83 aa)) is the Thyroglobulin type-1 domain. 3 cysteine pairs are disulfide-bonded: C187–C221, C232–C243, and C245–C266. Residues 261–263 (RGD) carry the Cell attachment site motif.

Interacts with igf1 and igf2.

The protein localises to the secreted. Its function is as follows. IGF-binding proteins prolong the half-life of the IGFs and have been shown to either inhibit or stimulate the growth promoting effects of the IGFs on cell culture. They alter the interaction of IGFs with their cell surface receptors. In Xenopus tropicalis (Western clawed frog), this protein is Insulin-like growth factor-binding protein 2.